The sequence spans 691 residues: DNA ligase (691 aa).

Residues 41 to 45 (DAEYD), 90 to 91 (SL), and Glu130 each bind NAD(+). Lys132 functions as the N6-AMP-lysine intermediate in the catalytic mechanism. 4 residues coordinate NAD(+): Arg153, Glu190, Lys307, and Lys331. Zn(2+) is bound by residues Cys425, Cys428, Cys443, and Cys449. A BRCT domain is found at 610–691 (APQGVLAGKT…LHQLLEGNTQ (82 aa)).

The protein belongs to the NAD-dependent DNA ligase family. LigA subfamily. Requires Mg(2+) as cofactor. The cofactor is Mn(2+).

The enzyme catalyses NAD(+) + (deoxyribonucleotide)n-3'-hydroxyl + 5'-phospho-(deoxyribonucleotide)m = (deoxyribonucleotide)n+m + AMP + beta-nicotinamide D-nucleotide.. DNA ligase that catalyzes the formation of phosphodiester linkages between 5'-phosphoryl and 3'-hydroxyl groups in double-stranded DNA using NAD as a coenzyme and as the energy source for the reaction. It is essential for DNA replication and repair of damaged DNA. In Burkholderia vietnamiensis (strain G4 / LMG 22486) (Burkholderia cepacia (strain R1808)), this protein is DNA ligase.